A 267-amino-acid chain; its full sequence is HTH-type transcriptional activator CsvR (267 aa).

DNA-binding regions (H-T-H motif) lie at residues 183-204 and 230-253; these read AIIA…ESED and ISQI…NKHF.

Homodimer.

In terms of biological role, transcriptional activator of fimbrial genes in enterotoxigenic E.coli. The protein is HTH-type transcriptional activator CsvR of Escherichia coli.